A 339-amino-acid polypeptide reads, in one-letter code: NADH-quinone oxidoreductase subunit H (339 aa).

A run of 9 helical transmembrane segments spans residues 9-29, 50-70, 82-102, 115-135, 161-181, 187-207, 235-255, 275-295, and 311-331; these read IFPL…LILC, PNVV…KLLF, ILFI…WAVI, VGVL…IIAG, MGLV…SEII, MPWW…ISVL, MGFA…SAMT, IPGF…FLWI, and GWKV…SVLV.

This sequence belongs to the complex I subunit 1 family. NDH-1 is composed of 14 different subunits. Subunits NuoA, H, J, K, L, M, N constitute the membrane sector of the complex.

It localises to the cell membrane. It catalyses the reaction a quinone + NADH + 5 H(+)(in) = a quinol + NAD(+) + 4 H(+)(out). NDH-1 shuttles electrons from NADH, via FMN and iron-sulfur (Fe-S) centers, to quinones in the respiratory chain. The immediate electron acceptor for the enzyme in this species is believed to be ubiquinone. Couples the redox reaction to proton translocation (for every two electrons transferred, four hydrogen ions are translocated across the cytoplasmic membrane), and thus conserves the redox energy in a proton gradient. This subunit may bind ubiquinone. This is NADH-quinone oxidoreductase subunit H from Rickettsia africae (strain ESF-5).